The primary structure comprises 713 residues: Phosphoribosylformylglycinamidine synthase subunit PurL (713 aa).

Residues Met-1 to Arg-17 are compositionally biased toward basic and acidic residues. The interval Met-1–Thr-20 is disordered. Residue His-34 is part of the active site. Residue Tyr-37 coordinates ATP. Residue Glu-85 participates in Mg(2+) binding. Substrate contacts are provided by residues Ser-86–His-89 and Arg-108. His-87 functions as the Proton acceptor in the catalytic mechanism. Asp-109 contacts Mg(2+). Substrate is bound at residue Gln-233. Position 261 (Asp-261) interacts with Mg(2+). Glu-305–Gln-307 is a substrate binding site. Residues Asp-480 and Gly-517 each contribute to the ATP site. Mg(2+) is bound at residue Asn-518. A substrate-binding site is contributed by Ser-520.

Belongs to the FGAMS family. As to quaternary structure, monomer. Part of the FGAM synthase complex composed of 1 PurL, 1 PurQ and 2 PurS subunits.

The protein localises to the cytoplasm. It catalyses the reaction N(2)-formyl-N(1)-(5-phospho-beta-D-ribosyl)glycinamide + L-glutamine + ATP + H2O = 2-formamido-N(1)-(5-O-phospho-beta-D-ribosyl)acetamidine + L-glutamate + ADP + phosphate + H(+). Its pathway is purine metabolism; IMP biosynthesis via de novo pathway; 5-amino-1-(5-phospho-D-ribosyl)imidazole from N(2)-formyl-N(1)-(5-phospho-D-ribosyl)glycinamide: step 1/2. In terms of biological role, part of the phosphoribosylformylglycinamidine synthase complex involved in the purines biosynthetic pathway. Catalyzes the ATP-dependent conversion of formylglycinamide ribonucleotide (FGAR) and glutamine to yield formylglycinamidine ribonucleotide (FGAM) and glutamate. The FGAM synthase complex is composed of three subunits. PurQ produces an ammonia molecule by converting glutamine to glutamate. PurL transfers the ammonia molecule to FGAR to form FGAM in an ATP-dependent manner. PurS interacts with PurQ and PurL and is thought to assist in the transfer of the ammonia molecule from PurQ to PurL. In Natronomonas pharaonis (strain ATCC 35678 / DSM 2160 / CIP 103997 / JCM 8858 / NBRC 14720 / NCIMB 2260 / Gabara) (Halobacterium pharaonis), this protein is Phosphoribosylformylglycinamidine synthase subunit PurL.